A 452-amino-acid polypeptide reads, in one-letter code: Pup--protein ligase (452 aa).

Glu9 is a Mg(2+) binding site. Arg53 contacts ATP. Residue Tyr55 coordinates Mg(2+). The active-site Proton acceptor is the Asp57. Mg(2+) is bound at residue Glu63. Thr66 and Trp419 together coordinate ATP.

Belongs to the Pup ligase/Pup deamidase family. Pup-conjugating enzyme subfamily.

The catalysed reaction is ATP + [prokaryotic ubiquitin-like protein]-L-glutamate + [protein]-L-lysine = ADP + phosphate + N(6)-([prokaryotic ubiquitin-like protein]-gamma-L-glutamyl)-[protein]-L-lysine.. It functions in the pathway protein degradation; proteasomal Pup-dependent pathway. The protein operates within protein modification; protein pupylation. Catalyzes the covalent attachment of the prokaryotic ubiquitin-like protein modifier Pup to the proteasomal substrate proteins, thereby targeting them for proteasomal degradation. This tagging system is termed pupylation. The ligation reaction involves the side-chain carboxylate of the C-terminal glutamate of Pup and the side-chain amino group of a substrate lysine. The polypeptide is Pup--protein ligase (Streptosporangium roseum (strain ATCC 12428 / DSM 43021 / JCM 3005 / KCTC 9067 / NCIMB 10171 / NRRL 2505 / NI 9100)).